Consider the following 546-residue polypeptide: MTTRYIFVTGGVVSSLGKGIAAASLAAILEARGLNVTIMKLDPYINVDPGTMSPTQHGEVFVTEDGAETDLDLGHYERFIRTKMNRRNNFTTGRIYEEVLRKERRGDYLGATIQVIPHITNAIKEKVIAGGEGHDVAIVEIGGTVGDIESLPFLESIRQLGVELGRDRTLFMHLTLVPFLGAAGEVKTKPTQHSVKELRSIGIAPDVLICRGDRAIPANERAKISLFCNVEERAVISLKDVDSIYKIPALLRSQGLDDLVVKRFGLECREADLSEWENVIYQEANPNGEVVIGMVGKYIELPDAYKSVNEALKHAGLKNRVSVTIKYIDSQTVEAKGDEVLQGLDGILVPGGFGERGVEGKIQAAKFARENNLPYFGICLGMQVALIEFARNVAGMADAHSTEFNKETPFPVVGLITEWVDEEGNVEQRHEASDLGGTMRLGAQLCHLLEGSKAAQAYKGNSCVERHRHRYEVNNKYRERLEQAGLVFSGLSSDRKLVEMIELKDHPWFVAGQFHPEFTSTPRDGHPLFEGFVAAASAHQKRDLKK.

Positions M1 to L266 are amidoligase domain. S14 is a CTP binding site. S14 is a binding site for UTP. ATP is bound by residues S15–I20 and D72. Mg(2+) contacts are provided by D72 and E140. CTP contacts are provided by residues D147 to E149, K187 to Q192, and K223. Residues K187–Q192 and K223 contribute to the UTP site. Position 239–241 (K239–V241) interacts with ATP. The Glutamine amidotransferase type-1 domain maps to V291–R542. G352 serves as a coordination point for L-glutamine. C379 functions as the Nucleophile; for glutamine hydrolysis in the catalytic mechanism. L-glutamine-binding positions include L380–Q383, E403, and R470. Residues H515 and E517 contribute to the active site.

It belongs to the CTP synthase family. In terms of assembly, homotetramer.

It catalyses the reaction UTP + L-glutamine + ATP + H2O = CTP + L-glutamate + ADP + phosphate + 2 H(+). The enzyme catalyses L-glutamine + H2O = L-glutamate + NH4(+). It carries out the reaction UTP + NH4(+) + ATP = CTP + ADP + phosphate + 2 H(+). It functions in the pathway pyrimidine metabolism; CTP biosynthesis via de novo pathway; CTP from UDP: step 2/2. With respect to regulation, allosterically activated by GTP, when glutamine is the substrate; GTP has no effect on the reaction when ammonia is the substrate. The allosteric effector GTP functions by stabilizing the protein conformation that binds the tetrahedral intermediate(s) formed during glutamine hydrolysis. Inhibited by the product CTP, via allosteric rather than competitive inhibition. In terms of biological role, catalyzes the ATP-dependent amination of UTP to CTP with either L-glutamine or ammonia as the source of nitrogen. Regulates intracellular CTP levels through interactions with the four ribonucleotide triphosphates. In Shewanella sp. (strain MR-7), this protein is CTP synthase.